Reading from the N-terminus, the 136-residue chain is Large ribosomal subunit protein bL21 (136 aa).

A disordered region spans residues 107–136; the sequence is RAAADRKTAPKRASAKAAADQTTAAQATAE. Over residues 121–136 the composition is skewed to low complexity; the sequence is AKAAADQTTAAQATAE.

This sequence belongs to the bacterial ribosomal protein bL21 family. In terms of assembly, part of the 50S ribosomal subunit. Contacts protein L20.

Its function is as follows. This protein binds to 23S rRNA in the presence of protein L20. In Acidothermus cellulolyticus (strain ATCC 43068 / DSM 8971 / 11B), this protein is Large ribosomal subunit protein bL21.